The primary structure comprises 1107 residues: OTU domain-containing protein 4 (1107 aa).

Position 1 is an N-acetylmethionine (Met1). Residues 34 to 155 (LYRKLVAKDG…GNHYDIVYPI (122 aa)) form the OTU domain. Positions 39–45 (VAKDGSC) are cys-loop. Asp42 is an active-site residue. Cys45 (nucleophile) is an active-site residue. The segment at 94-104 (LENPQEWVGQV) is variable-loop. The residue at position 120 (Tyr120) is a Phosphotyrosine. Phosphoserine is present on residues Ser126 and Ser128. Position 131 is a phosphothreonine (Thr131). The segment at 143–148 (FSNGNH) is his-loop. The active site involves His148. Phosphoserine is present on residues Ser166, Ser199, Ser202, and Ser204. Residues 195 to 206 (EESNSEISDSED) are compositionally biased toward acidic residues. Disordered stretches follow at residues 195-239 (EESN…SADL) and 322-431 (KHTP…DFDH). Polar residues predominate over residues 226-236 (GSENPKNNGNS). A Phosphoserine modification is found at Ser340. A compositionally biased stretch (low complexity) spans 392-403 (SSHSTGSQSQKS). Residues 419 to 431 (RKPDRERAEDFDH) show a composition bias toward basic and acidic residues. Tyr438 is subject to Phosphotyrosine. Ser442 carries the phosphoserine modification. Tyr459 carries the phosphotyrosine modification. Positions 470 to 568 (PALSSSSVSQ…KPAEHIPLSN (99 aa)) are disordered. Positions 473–486 (SSSSVSQSPSQNSN) are enriched in low complexity. Positions 495-528 (HARDRKGSMRRADAEERKDKDSLRGHTHVDKKPE) are enriched in basic and acidic residues. Phosphoserine occurs at positions 544 and 895. The disordered stretch occupies residues 918-1107 (LSAASVSSKH…MGDGHRGQHT (190 aa)). Positions 963–994 (NREREPGSAEPEPKRTIQSLKEKPEKVKDPKT) are enriched in basic and acidic residues. 4 positions are modified to phosphoserine: Ser1000, Ser1005, Ser1016, and Ser1017. Polar residues predominate over residues 1032–1041 (SKQFYNQTYG). Ser1042 is subject to Phosphoserine. 2 stretches are compositionally biased toward basic and acidic residues: residues 1060–1079 (VRGEESWKGQPNRSRDEGYQ) and 1089–1107 (YRGDRRRSGMGDGHRGQHT).

As to quaternary structure, interacts with MYD88; the interaction is direct. Interacts with ALKBH3; the interaction is direct. Interacts with USP7; the interaction is direct. Interacts with USP9X; the interaction is direct. In terms of processing, phosphorylation at Ser-202 and Ser-204 activates 'Lys-63'-specific deubiquitinase activity. Induced upon stimulation with IL1B.

Its subcellular location is the cytoplasm. It localises to the nucleus. The enzyme catalyses Thiol-dependent hydrolysis of ester, thioester, amide, peptide and isopeptide bonds formed by the C-terminal Gly of ubiquitin (a 76-residue protein attached to proteins as an intracellular targeting signal).. Its activity is regulated as follows. Phosphorylation on Ser-202 and Ser-204 induces 'Lys-63'-specific deubiquitinase activity. In terms of biological role, deubiquitinase which hydrolyzes the isopeptide bond between the ubiquitin C-terminus and the lysine epsilon-amino group of the target protein. May negatively regulate inflammatory and pathogen recognition signaling in innate immune response. Upon phosphorylation at Ser-202 and Ser-204 residues, via IL-1 receptor and Toll-like receptor signaling pathway, specifically deubiquitinates 'Lys-63'-polyubiquitinated MYD88 adapter protein triggering down-regulation of NF-kappa-B-dependent transcription of inflammatory mediators. Independently of the catalytic activity, acts as a scaffold for alternative deubiquitinases to assemble specific deubiquitinase-substrate complexes. Associates with USP7 and USP9X deubiquitinases to stabilize alkylation repair enzyme ALKBH3, thereby promoting the repair of alkylated DNA lesions. This chain is OTU domain-containing protein 4, found in Mus musculus (Mouse).